The following is a 344-amino-acid chain: Lipase chaperone (344 aa).

Residues 13–35 (RIAPYGAAGLAAIVGVAIWSGTG) traverse the membrane as a helical segment.

This sequence belongs to the lipase chaperone family.

It localises to the cell inner membrane. Its function is as follows. May be involved in the folding of the extracellular lipase during its passage through the periplasm. This is Lipase chaperone from Burkholderia vietnamiensis (strain G4 / LMG 22486) (Burkholderia cepacia (strain R1808)).